A 906-amino-acid chain; its full sequence is Valine--tRNA ligase (906 aa).

The 'HIGH' region motif lies at 43–53 (PNVTGSLHIGH). The short motif at 548–552 (KMSKS) is the 'KMSKS' region element. Lysine 551 serves as a coordination point for ATP. Positions 842–905 (EKARLTKDIA…EAALSRLASV (64 aa)) form a coiled coil.

The protein belongs to the class-I aminoacyl-tRNA synthetase family. ValS type 1 subfamily. As to quaternary structure, monomer.

It is found in the cytoplasm. The catalysed reaction is tRNA(Val) + L-valine + ATP = L-valyl-tRNA(Val) + AMP + diphosphate. Catalyzes the attachment of valine to tRNA(Val). As ValRS can inadvertently accommodate and process structurally similar amino acids such as threonine, to avoid such errors, it has a 'posttransfer' editing activity that hydrolyzes mischarged Thr-tRNA(Val) in a tRNA-dependent manner. The polypeptide is Valine--tRNA ligase (Caulobacter vibrioides (strain ATCC 19089 / CIP 103742 / CB 15) (Caulobacter crescentus)).